Reading from the N-terminus, the 418-residue chain is Putative ion-transport protein YfeO (418 aa).

Transmembrane regions (helical) follow at residues 10-30 (LLLS…LIVV), 54-74 (DSPF…GLVI), 99-119 (ALPG…SLGP), 120-140 (EHPI…RLLP), 149-169 (ILAS…AALI), 186-206 (LFAP…FFHP), 223-243 (ILSG…AVWC), 258-278 (VLML…AGPV), 300-320 (DYFL…ASGF), 322-342 (GGRI…LHEH), 343-363 (VPAV…VLVV), and 371-391 (LFMA…CIVM).

Belongs to the chloride channel (TC 2.A.49) family.

It is found in the cell membrane. The sequence is that of Putative ion-transport protein YfeO from Escherichia coli O7:K1 (strain IAI39 / ExPEC).